The sequence spans 525 residues: Bestrophin homolog 15 (525 aa).

The next 4 helical transmembrane spans lie at 36-56 (LFMFIIAFITVSSVYRSNLII), 71-91 (FDQNMDFIPLTFMLGFFVTII), 237-257 (LAYPQVVFLAVRSYFFMALIA), and 273-293 (ILYPTVPFVMSILQFIFVVGW).

This sequence belongs to the anion channel-forming bestrophin (TC 1.A.46) family. Calcium-sensitive chloride channel subfamily. Forms oligomers.

The protein localises to the cell membrane. Forms chloride channels. This chain is Bestrophin homolog 15 (best-15), found in Caenorhabditis elegans.